A 208-amino-acid chain; its full sequence is Protein-L-isoaspartate O-methyltransferase (208 aa).

The active site involves S59.

It belongs to the methyltransferase superfamily. L-isoaspartyl/D-aspartyl protein methyltransferase family.

It localises to the cytoplasm. The catalysed reaction is [protein]-L-isoaspartate + S-adenosyl-L-methionine = [protein]-L-isoaspartate alpha-methyl ester + S-adenosyl-L-homocysteine. Its function is as follows. Catalyzes the methyl esterification of L-isoaspartyl residues in peptides and proteins that result from spontaneous decomposition of normal L-aspartyl and L-asparaginyl residues. It plays a role in the repair and/or degradation of damaged proteins. This Escherichia coli O7:K1 (strain IAI39 / ExPEC) protein is Protein-L-isoaspartate O-methyltransferase.